The chain runs to 87 residues: U3-theraphotoxin-Hhn1e (87 aa).

The signal sequence occupies residues 1–24 (MVNMKASMFLTFAGLVLLFVVCYA). A propeptide spanning residues 25–52 (SESEEKEFPKGMLSSIFAVDNDFKQEER) is cleaved from the precursor. Intrachain disulfides connect Cys54/Cys67, Cys61/Cys72, and Cys66/Cys79.

Belongs to the neurotoxin 10 (Hwtx-1) family. 51 (Hntx-8) subfamily. Hntx-8 sub-subfamily. In terms of tissue distribution, expressed by the venom gland.

Its subcellular location is the secreted. Ion channel inhibitor. This is U3-theraphotoxin-Hhn1e from Cyriopagopus hainanus (Chinese bird spider).